A 615-amino-acid chain; its full sequence is Alpha-fetoprotein (615 aa).

An N-terminal signal peptide occupies residues 1 to 15 (MAVLPLSGAIRLSRG). The short motif at 14–16 (RGD) is the Cell attachment site element. 3 Albumin domains span residues 27–218 (WAKK…RRQA), 223–415 (KPIR…ELKK), and 416–609 (HIYE…VLVT). 2 disulfides stabilise this stretch: C109/C121 and C120/C131. N137 and N157 each carry an N-linked (GlcNAc...) asparagine glycan. Intrachain disulfides connect C155–C200, C199–C213, C236–C282, C281–C289, C301–C315, C314–C325, C396–C405, C428–C458, and C457–C468. Residues 283 to 285 (RGD) carry the Cell attachment site motif. The N-linked (GlcNAc...) asparagine glycan is linked to N472. 4 cysteine pairs are disulfide-bonded: C485/C501, C500/C511, C538/C593, and C592/C601.

This sequence belongs to the ALB/AFP/VDB family. Dimeric and trimeric forms have been found in addition to the monomeric form. Sulfated.

Its subcellular location is the secreted. Binds copper, nickel, and fatty acids as well as, and bilirubin less well than, serum albumin. The protein is Alpha-fetoprotein (AFP) of Gallus gallus (Chicken).